Reading from the N-terminus, the 262-residue chain is Ribosomal RNA small subunit methyltransferase A (262 aa).

Residues histidine 16, leucine 18, glycine 43, glutamate 64, aspartate 89, and asparagine 109 each coordinate S-adenosyl-L-methionine.

The protein belongs to the class I-like SAM-binding methyltransferase superfamily. rRNA adenine N(6)-methyltransferase family. RsmA subfamily.

It is found in the cytoplasm. The enzyme catalyses adenosine(1518)/adenosine(1519) in 16S rRNA + 4 S-adenosyl-L-methionine = N(6)-dimethyladenosine(1518)/N(6)-dimethyladenosine(1519) in 16S rRNA + 4 S-adenosyl-L-homocysteine + 4 H(+). In terms of biological role, specifically dimethylates two adjacent adenosines (A1518 and A1519) in the loop of a conserved hairpin near the 3'-end of 16S rRNA in the 30S particle. May play a critical role in biogenesis of 30S subunits. The sequence is that of Ribosomal RNA small subunit methyltransferase A from Xanthomonas campestris pv. campestris (strain B100).